We begin with the raw amino-acid sequence, 556 residues long: Phenylalanine--tRNA ligase beta subunit (556 aa).

The B5 domain maps to 274-349; it reads HEPEEMEVDL…ITLGLNKIGY (76 aa). Mg(2+)-binding residues include D327, D333, E336, and E337.

Belongs to the phenylalanyl-tRNA synthetase beta subunit family. Type 2 subfamily. Tetramer of two alpha and two beta subunits. It depends on Mg(2+) as a cofactor.

The protein localises to the cytoplasm. The enzyme catalyses tRNA(Phe) + L-phenylalanine + ATP = L-phenylalanyl-tRNA(Phe) + AMP + diphosphate + H(+). This chain is Phenylalanine--tRNA ligase beta subunit, found in Korarchaeum cryptofilum (strain OPF8).